A 383-amino-acid polypeptide reads, in one-letter code: 1-deoxy-D-xylulose 5-phosphate reductoisomerase (383 aa).

The NADPH site is built by Thr-10, Gly-11, Ser-12, Ile-13, and Asn-123. Position 124 (Lys-124) interacts with 1-deoxy-D-xylulose 5-phosphate. Glu-125 contacts NADPH. Asp-149 serves as a coordination point for Mn(2+). 1-deoxy-D-xylulose 5-phosphate contacts are provided by Ser-150, Glu-151, Ser-175, and His-198. Glu-151 lines the Mn(2+) pocket. Position 204 (Gly-204) interacts with NADPH. Ser-211, Asn-216, Lys-217, and Glu-220 together coordinate 1-deoxy-D-xylulose 5-phosphate. Glu-220 provides a ligand contact to Mn(2+).

Belongs to the DXR family. Mg(2+) is required as a cofactor. The cofactor is Mn(2+).

The catalysed reaction is 2-C-methyl-D-erythritol 4-phosphate + NADP(+) = 1-deoxy-D-xylulose 5-phosphate + NADPH + H(+). It participates in isoprenoid biosynthesis; isopentenyl diphosphate biosynthesis via DXP pathway; isopentenyl diphosphate from 1-deoxy-D-xylulose 5-phosphate: step 1/6. Catalyzes the NADPH-dependent rearrangement and reduction of 1-deoxy-D-xylulose-5-phosphate (DXP) to 2-C-methyl-D-erythritol 4-phosphate (MEP). The chain is 1-deoxy-D-xylulose 5-phosphate reductoisomerase from Desulfosudis oleivorans (strain DSM 6200 / JCM 39069 / Hxd3) (Desulfococcus oleovorans).